A 422-amino-acid chain; its full sequence is Probable cell wall mannoprotein PIR32 (422 aa).

Positions 1-21 (MIHYLIFPILLIFFQIIKSSG) are cleaved as a signal peptide. Disordered regions lie at residues 116–143 (DGQV…EDCF) and 155–313 (DYQD…EGYE). Acidic residues predominate over residues 133–143 (GDDDDDDEDCF). The segment covering 158-169 (DMNTQEQANEDS) has biased composition (polar residues). The stretch at 179–214 (HQQVVDQNQQINEEEEETQEQQMQEENNNTNEIEDN) forms a coiled coil. 2 stretches are compositionally biased toward low complexity: residues 180–189 (QQVVDQNQQI) and 198–209 (EQQMQEENNNTN). A glycan (N-linked (GlcNAc...) asparagine) is linked at Asn-206. Over residues 220-231 (ETIEEIYDDIDN) the composition is skewed to acidic residues. N-linked (GlcNAc...) asparagine glycans are attached at residues Asn-232 and Asn-237. Basic residues predominate over residues 238–248 (NSKKYHKKRPH). 2 stretches are compositionally biased toward basic and acidic residues: residues 249–284 (NNYE…DHKW) and 300–311 (QEQKPKHEKSEG). N-linked (GlcNAc...) asparagine glycosylation is present at Asn-328.

This sequence belongs to the PIR protein family. O-glycosylated. Extensively O-mannosylated.

The protein localises to the secreted. Its subcellular location is the cell wall. Probable structural component of the cell wall involved in cell wall integrity and virulence. This Candida albicans (strain SC5314 / ATCC MYA-2876) (Yeast) protein is Probable cell wall mannoprotein PIR32 (PIR32).